The sequence spans 632 residues: DNA mismatch repair protein MutL (632 aa).

The protein belongs to the DNA mismatch repair MutL/HexB family.

Functionally, this protein is involved in the repair of mismatches in DNA. It is required for dam-dependent methyl-directed DNA mismatch repair. May act as a 'molecular matchmaker', a protein that promotes the formation of a stable complex between two or more DNA-binding proteins in an ATP-dependent manner without itself being part of a final effector complex. The chain is DNA mismatch repair protein MutL from Pseudomonas putida (strain GB-1).